The following is a 718-amino-acid chain: Sodium/myo-inositol cotransporter (718 aa).

At 1–9 (MRAVLETAD) the chain is on the extracellular side. A helical transmembrane segment spans residues 10–29 (IAIVALYFILVMCIGFFAMW). Residues 30-38 (KSNRSTVSG) are Cytoplasmic-facing. A helical transmembrane segment spans residues 39–57 (YFLAGRSMTWVAIGASLFV). The Extracellular segment spans residues 58-86 (SNIGSEHFIGLAGSGAASGFAVGAWEFNA). A helical membrane pass occupies residues 87 to 110 (LLLLQLLGWVFIPIYIRSGVYTMP). Residues 111–123 (EYLSKRFGGHRIQ) lie on the Cytoplasmic side of the membrane. A helical transmembrane segment spans residues 124–144 (VYFAALSLILYIFTKLSVDLY). At 145–157 (SGALFIQESLGWN) the chain is on the extracellular side. The chain crosses the membrane as a helical span at residues 158-183 (LYVSVILLIGMTALLTVTGGLVAVIY). At 184–186 (TDT) the chain is on the cytoplasmic side. The chain crosses the membrane as a helical span at residues 187–205 (LQALLMIVGALTLMIISMM). Over 206 to 303 (EIGGFEEVKR…HAKGSTLMAG (98 aa)) the chain is Extracellular. Asn-232 is a glycosylation site (N-linked (GlcNAc...) asparagine). Residues 304-324 (FLKLLPMFIIVVPGMISRILF) form a helical membrane-spanning segment. The Cytoplasmic portion of the chain corresponds to 325–353 (ADDIACINPEHCMQVCGSRAGCSNIAYPR). A helical transmembrane segment spans residues 354 to 376 (LVMKLVPVGLRGLMMAVMIAALM). The Extracellular segment spans residues 377–406 (SDLDSIFNSASTIFTLDVYKLIRRSASSRE). The helical transmembrane segment at 407–430 (LMIVGRIFVAFMVVISIAWVPIIV) threads the bilayer. Over 431 to 443 (EMQGGQMYLYIQE) the chain is Cytoplasmic. The chain crosses the membrane as a helical span at residues 444-462 (VADYLTPPVAALFLLAIFW). At 463–510 (KRCNEQGAFYGGMAGFVLGAVRLTLAFAYRAPECDQPDNRPGFIKDIH) the chain is on the extracellular side. The chain crosses the membrane as a helical span at residues 511–532 (YMYVATALFWVTGLITVIVSLL). The Cytoplasmic portion of the chain corresponds to 533–695 (TPPPTKEQIR…QMLEEPPQVK (163 aa)). 2 positions are modified to phosphoserine: Ser-594 and Ser-632. Residues 696–716 (LILNIGLFAVCSLGIFMFVYF) traverse the membrane as a helical segment. Residues 717-718 (SL) are Extracellular-facing.

Belongs to the sodium:solute symporter (SSF) (TC 2.A.21) family. In terms of assembly, interacts with KCNQ2 (via the pore module). Interacts with KCNQ1; this interaction is direct. Forms coregulatory complexes with ion channels KCNQ2-KCNQ3 and KCNQ1-KCNE2. In terms of tissue distribution, kidney cortex and medulla.

The protein resides in the apical cell membrane. It is found in the basolateral cell membrane. It catalyses the reaction myo-inositol(out) + 2 Na(+)(out) = myo-inositol(in) + 2 Na(+)(in). It carries out the reaction scyllo-inositol(out) + 2 Na(+)(out) = scyllo-inositol(in) + 2 Na(+)(in). Its activity is regulated as follows. Inhibited by phlorizin and phloretin. In terms of biological role, electrogenic Na(+)-coupled sugar symporter that actively transports myo-inositol and its stereoisomer scyllo-inositol across the plasma membrane, with a Na(+) to sugar coupling ratio of 2:1. Maintains myo-inositol concentration gradient that defines cell volume and fluid balance during osmotic stress, in particular in the fetoplacental unit and central nervous system. Forms coregulatory complexes with voltage-gated K(+) ion channels, allosterically altering ion selectivity, voltage dependence and gating kinetics of the channel. In turn, K(+) efflux through the channel forms a local electrical gradient that modulates electrogenic Na(+)-coupled myo-inositol influx through the transporter. Associates with KCNQ1-KCNE2 channel in the apical membrane of choroid plexus epithelium and regulates the myo-inositol gradient between blood and cerebrospinal fluid with an impact on neuron excitability. Associates with KCNQ2-KCNQ3 channel altering ion selectivity, increasing Na(+) and Cs(+) permeation relative to K(+) permeation. Provides myo-inositol precursor for biosynthesis of phosphoinositides such as PI(4,5)P2, thus indirectly affecting the activity of phosphoinositide-dependent ion channels and Ca(2+) signaling upon osmotic stress. Has very low affinity for sugars such as L-fucose and L-xylose, with an affinity about three orders of magnitude lower than myo-inositol. This Canis lupus familiaris (Dog) protein is Sodium/myo-inositol cotransporter (SLC5A3).